The sequence spans 69 residues: MAQELSEKELLKMEVEQLKKEVKNPRALISKTGKEIKDYVEAEAGNDPLLKGIPEDKNPFKEKGGCIIS.

Cysteine 66 carries the cysteine methyl ester modification. Cysteine 66 carries S-farnesyl cysteine lipidation. Residues 67-69 constitute a propeptide, removed in mature form; sequence IIS.

It belongs to the G protein gamma family. G proteins are composed of 3 units, alpha, beta and gamma.

The protein localises to the cell membrane. Functionally, guanine nucleotide-binding proteins (G proteins) are involved as a modulator or transducer in various transmembrane signaling systems. The beta and gamma chains are required for the GTPase activity, for replacement of GDP by GTP, and for G protein-effector interaction. The protein is Guanine nucleotide-binding protein G(I)/G(S)/G(O) subunit gamma-T2 (GNGT2) of Bos taurus (Bovine).